A 702-amino-acid chain; its full sequence is Methionine--tRNA ligase (702 aa).

The 'HIGH' region signature appears at 14–24 (PYANGPVHLGH). Zn(2+) is bound by residues Cys146, Cys149, Cys159, and Cys162. Positions 344-348 (KFSKS) match the 'KMSKS' region motif. ATP is bound at residue Lys347. In terms of domain architecture, tRNA-binding spans 601-702 (DFQKVDLRVA…GEKINGQSVQ (102 aa)).

This sequence belongs to the class-I aminoacyl-tRNA synthetase family. MetG type 1 subfamily. In terms of assembly, homodimer. Zn(2+) is required as a cofactor.

The protein localises to the cytoplasm. The catalysed reaction is tRNA(Met) + L-methionine + ATP = L-methionyl-tRNA(Met) + AMP + diphosphate. Its function is as follows. Is required not only for elongation of protein synthesis but also for the initiation of all mRNA translation through initiator tRNA(fMet) aminoacylation. In Chlorobium luteolum (strain DSM 273 / BCRC 81028 / 2530) (Pelodictyon luteolum), this protein is Methionine--tRNA ligase.